The sequence spans 208 residues: Superoxide dismutase [Mn] 2 (208 aa).

Mn(2+)-binding residues include His-28, His-83, Asp-165, and His-169.

It belongs to the iron/manganese superoxide dismutase family. As to quaternary structure, homodimer. The cofactor is Mn(2+).

It catalyses the reaction 2 superoxide + 2 H(+) = H2O2 + O2. Its function is as follows. Destroys superoxide anion radicals which are normally produced within the cells and which are toxic to biological systems. The protein is Superoxide dismutase [Mn] 2 (sodA2) of Bacillus anthracis.